The following is a 168-amino-acid chain: Lipoprotein signal peptidase (168 aa).

4 helical membrane-spanning segments follow: residues 15 to 35, 47 to 67, 75 to 95, and 107 to 127; these read WLWL…VVMD, VLPF…SFLS, WLFT…MSKL, and ALII…GFVV. Residues D128 and D146 contribute to the active site. A helical transmembrane segment spans residues 141–161; it reads AFNLADTTICIGAAMIILDGF.

It belongs to the peptidase A8 family.

It localises to the cell inner membrane. The catalysed reaction is Release of signal peptides from bacterial membrane prolipoproteins. Hydrolyzes -Xaa-Yaa-Zaa-|-(S,diacylglyceryl)Cys-, in which Xaa is hydrophobic (preferably Leu), and Yaa (Ala or Ser) and Zaa (Gly or Ala) have small, neutral side chains.. It functions in the pathway protein modification; lipoprotein biosynthesis (signal peptide cleavage). In terms of biological role, this protein specifically catalyzes the removal of signal peptides from prolipoproteins. This chain is Lipoprotein signal peptidase, found in Vibrio campbellii (strain ATCC BAA-1116).